A 746-amino-acid chain; its full sequence is Mediator of RNA polymerase II transcription subunit 25 (746 aa).

The segment at 1-226 is interaction with the Mediator complex; that stretch reads MVPGSEGPAR…PRHMVLVRGL (226 aa). Disordered stretches follow at residues 233–273 and 298–390; these read GSAP…QQYQ and GLGP…PALG. Residues 238 to 251 are compositionally biased toward pro residues; that stretch reads PLQPKQPVPLPPAA. Residues 252–262 show a composition bias toward low complexity; sequence PAGATLSTAPQ. The span at 329-342 shows a compositional bias: pro residues; sequence PPGPPGAPKPPPAS. A compositionally biased stretch (low complexity) spans 343–354; it reads QPSLVSTVAPGP. Residues 389 to 543 form an interaction with VP16 region; the sequence is LGGQQSVSNK…VNGIRQVITN (155 aa). An interaction with CREBBP region spans residues 395 to 545; it reads VSNKLLAWSG…GIRQVITNHK (151 aa). The interval 548–746 is disordered; sequence QQQKLEQQRG…MEDDILMDLI (199 aa). 2 interaction with RARA regions span residues 563–652 and 639–706; these read APPG…LLNP and PGAN…WPAQ. Low complexity predominate over residues 599–610; the sequence is AAAGQPQPQGAA. Positions 611 to 633 are enriched in pro residues; the sequence is PAPPGAPQGPPGAAPGPPPPGPL. An LXXLL motif motif is present at residues 645 to 649; the sequence is LRSLL. Pro residues-rich tracts occupy residues 651–663, 672–682, and 690–701; these read NPPP…PPPQ, PGAPALLPPPH, and LGPPLLHPPPAQ. Position 724 is an asymmetric dimethylarginine (Arg724). The span at 737 to 746 shows a compositional bias: acidic residues; it reads MEDDILMDLI.

Belongs to the Mediator complex subunit 25 family. In terms of assembly, component of the Mediator complex, which is composed of MED1, MED4, MED6, MED7, MED8, MED9, MED10, MED11, MED12, MED13, MED13L, MED14, MED15, MED16, MED17, MED18, MED19, MED20, MED21, MED22, MED23, MED24, MED25, MED26, MED27, MED29, MED30, MED31, CCNC, CDK8 and CDC2L6/CDK11. The MED12, MED13, CCNC and CDK8 subunits form a distinct module termed the CDK8 module. Mediator containing the CDK8 module is less active than Mediator lacking this module in supporting transcriptional activation. Individual preparations of the Mediator complex lacking one or more distinct subunits have been variously termed ARC, CRSP, DRIP, PC2, SMCC and TRAP. Interacts with CREBBP. Interacts with ESR1, GR, RARA, RXRA and THRB in a ligand-dependent fashion. Binds the Herpes simplex virus activator VP16.

The protein resides in the nucleus. In terms of biological role, component of the Mediator complex, a coactivator involved in the regulated transcription of nearly all RNA polymerase II-dependent genes. Mediator functions as a bridge to convey information from gene-specific regulatory proteins to the basal RNA polymerase II transcription machinery. Mediator is recruited to promoters by direct interactions with regulatory proteins and serves as a scaffold for the assembly of a functional preinitiation complex with RNA polymerase II and the general transcription factors. Required for RARA/RXRA-mediated transcription. This is Mediator of RNA polymerase II transcription subunit 25 (MED25) from Bos taurus (Bovine).